Consider the following 446-residue polypeptide: tRNA-2-methylthio-N(6)-dimethylallyladenosine synthase (446 aa).

The MTTase N-terminal domain maps to 5–121; that stretch reads KYLYVETFGC…LPEIVRAAER (117 aa). Cys14, Cys50, Cys84, Cys159, Cys163, and Cys166 together coordinate [4Fe-4S] cluster. The 231-residue stretch at 145 to 375 folds into the Radical SAM core domain; that stretch reads GEGGVTRFVT…QTLQQQMKRE (231 aa). Positions 378-440 constitute a TRAM domain; sequence ISFVGTRQLV…QNSLLGEIVT (63 aa).

This sequence belongs to the methylthiotransferase family. MiaB subfamily. In terms of assembly, monomer. [4Fe-4S] cluster is required as a cofactor.

Its subcellular location is the cytoplasm. The enzyme catalyses N(6)-dimethylallyladenosine(37) in tRNA + (sulfur carrier)-SH + AH2 + 2 S-adenosyl-L-methionine = 2-methylsulfanyl-N(6)-dimethylallyladenosine(37) in tRNA + (sulfur carrier)-H + 5'-deoxyadenosine + L-methionine + A + S-adenosyl-L-homocysteine + 2 H(+). Catalyzes the methylthiolation of N6-(dimethylallyl)adenosine (i(6)A), leading to the formation of 2-methylthio-N6-(dimethylallyl)adenosine (ms(2)i(6)A) at position 37 in tRNAs that read codons beginning with uridine. This chain is tRNA-2-methylthio-N(6)-dimethylallyladenosine synthase, found in Geobacter sulfurreducens (strain ATCC 51573 / DSM 12127 / PCA).